Consider the following 149-residue polypeptide: Interleukin-2 (149 aa).

An N-terminal signal peptide occupies residues 1–20 (MYRMQLLSCIALTLAVLANS). A glycan (O-linked (GalNAc...) threonine) is linked at Thr-23. Cys-78 and Cys-121 are oxidised to a cystine. N-linked (GlcNAc...) asparagine glycosylation occurs at Asn-106.

The protein belongs to the IL-2 family.

It is found in the secreted. In terms of biological role, cytokine produced by activated CD4-positive helper T-cells and to a lesser extend activated CD8-positive T-cells and natural killer (NK) cells that plays pivotal roles in the immune response and tolerance. Binds to a receptor complex composed of either the high-affinity trimeric IL-2R (IL2RA/CD25, IL2RB/CD122 and IL2RG/CD132) or the low-affinity dimeric IL-2R (IL2RB and IL2RG). Interaction with the receptor leads to oligomerization and conformation changes in the IL-2R subunits resulting in downstream signaling starting with phosphorylation of JAK1 and JAK3. In turn, JAK1 and JAK3 phosphorylate the receptor to form a docking site leading to the phosphorylation of several substrates including STAT5. This process leads to activation of several pathways including STAT, phosphoinositide-3-kinase/PI3K and mitogen-activated protein kinase/MAPK pathways. Functions as a T-cell growth factor and can increase NK-cell cytolytic activity as well. Promotes strong proliferation of activated B-cells and subsequently immunoglobulin production. Plays a pivotal role in regulating the adaptive immune system by controlling the survival and proliferation of regulatory T-cells, which are required for the maintenance of immune tolerance. Moreover, participates in the differentiation and homeostasis of effector T-cell subsets, including Th1, Th2, Th17 as well as memory CD8-positive T-cells. This Equus caballus (Horse) protein is Interleukin-2 (IL2).